Consider the following 152-residue polypeptide: Acidic phospholipase A2 57 (152 aa).

The signal sequence occupies residues 1–21; that stretch reads MYPAHLLGLLAVCVSLLGAAS. The propeptide occupies 22–27; that stretch reads IPPLPL. Disulfide bonds link C38–C104, C54–C151, C56–C72, C71–C132, C78–C125, C88–C118, and C111–C123. Y55, G57, and G59 together coordinate Ca(2+). H75 is a catalytic residue. A Ca(2+)-binding site is contributed by D76. The active site involves D126.

The protein belongs to the phospholipase A2 family. Group I subfamily. D49 sub-subfamily. It depends on Ca(2+) as a cofactor. In terms of tissue distribution, expressed by the venom gland.

The protein localises to the secreted. The catalysed reaction is a 1,2-diacyl-sn-glycero-3-phosphocholine + H2O = a 1-acyl-sn-glycero-3-phosphocholine + a fatty acid + H(+). In terms of biological role, PLA2 catalyzes the calcium-dependent hydrolysis of the 2-acyl groups in 3-sn-phosphoglycerides. This is Acidic phospholipase A2 57 from Hydrophis hardwickii (Hardwick's spine-bellied seasnake).